Reading from the N-terminus, the 95-residue chain is Fatty acid-binding protein, liver (95 aa).

Residues Lys-13 and Lys-18 each carry the N6-succinyllysine modification. Phosphoserine is present on Ser-21. N6-succinyllysine is present on Lys-28. Thr-33 is subject to Phosphothreonine. Ser-38 carries the phosphoserine modification. Lys-39, Lys-47, and Lys-59 each carry N6-succinyllysine. Ser-69 is modified (phosphoserine). Position 90 is an N6-succinyllysine (Lys-90).

This sequence belongs to the calycin superfamily. Fatty-acid binding protein (FABP) family. In terms of assembly, monomer.

It is found in the cytoplasm. Functionally, this protein binds free fatty acids and their coenzyme A derivatives, bilirubin, and some other small molecules in the cytoplasm; it may be involved in intracellular lipid transport. This chain is Fatty acid-binding protein, liver (FABP1), found in Chaetophractus villosus (South American armadillo).